The primary structure comprises 407 residues: RING finger protein 44 (407 aa).

A disordered region spans residues Leu26–Leu58. The RING-type; atypical zinc-finger motif lies at Cys355–Arg396.

The chain is RING finger protein 44 (Rnf44) from Mus musculus (Mouse).